We begin with the raw amino-acid sequence, 195 residues long: Large ribosomal subunit protein mL58 (195 aa).

Residues 1–18 constitute a mitochondrion transit peptide; the sequence is MIGRGVCCRSFHTAGSAW.

It belongs to the mitochondrion-specific ribosomal protein mL58 family. Component of the mitochondrial large ribosomal subunit (mt-LSU). Mature yeast 74S mitochondrial ribosomes consist of a small (37S) and a large (54S) subunit. The 37S small subunit contains a 15S ribosomal RNA (15S mt-rRNA) and 34 different proteins. The 54S large subunit contains a 21S rRNA (21S mt-rRNA) and 46 different proteins.

The protein localises to the mitochondrion. Its function is as follows. Component of the mitochondrial ribosome (mitoribosome), a dedicated translation machinery responsible for the synthesis of mitochondrial genome-encoded proteins, including at least some of the essential transmembrane subunits of the mitochondrial respiratory chain. The mitoribosomes are attached to the mitochondrial inner membrane and translation products are cotranslationally integrated into the membrane. The chain is Large ribosomal subunit protein mL58 (MRPL20) from Saccharomyces cerevisiae (strain ATCC 204508 / S288c) (Baker's yeast).